We begin with the raw amino-acid sequence, 367 residues long: Peptide chain release factor 2 (367 aa).

At Gln-254 the chain carries N5-methylglutamine.

Belongs to the prokaryotic/mitochondrial release factor family. Methylated by PrmC. Methylation increases the termination efficiency of RF2.

The protein localises to the cytoplasm. Its function is as follows. Peptide chain release factor 2 directs the termination of translation in response to the peptide chain termination codons UGA and UAA. The protein is Peptide chain release factor 2 of Janthinobacterium sp. (strain Marseille) (Minibacterium massiliensis).